The primary structure comprises 313 residues: Olfactory receptor 8B2 (313 aa).

Over 1–25 the chain is Extracellular; sequence MLARNNSLVTEFILAGLTDHPEFRQ. N5 carries N-linked (GlcNAc...) asparagine glycosylation. The chain crosses the membrane as a helical span at residues 26-46; the sequence is PLFFLFLVIYIVTMVGNLGLI. Topologically, residues 47 to 54 are cytoplasmic; that stretch reads TLFGLNSH. A helical membrane pass occupies residues 55-75; sequence LHTPMYYFLFNLSFIDLCYSS. Residues 76–99 are Extracellular-facing; it reads VFTPKMLMNFVSKKNIISNVGCMT. C97 and C189 are disulfide-bonded. Residues 100 to 120 form a helical membrane-spanning segment; the sequence is RLFFFLFFVISECYMLTSMAY. The Cytoplasmic segment spans residues 121–139; the sequence is DRYVAICNPLLYKVTMSHQ. Residues 140 to 160 traverse the membrane as a helical segment; that stretch reads VCSMLTFAAYIMGLAGATAHT. The Extracellular segment spans residues 161 to 197; it reads GCMLRLTFCSANIINHYLCDILPLLQLSCTSTYVNEV. Residues 198-217 traverse the membrane as a helical segment; it reads VVLIVVGTNITVPSCTILIS. The Cytoplasmic portion of the chain corresponds to 218–237; the sequence is YVFIVTSILHIKSTQGRSKA. A helical membrane pass occupies residues 238–258; the sequence is FSTCSSHVIALSLFFGSAAFM. Residues 259-270 lie on the Extracellular side of the membrane; that stretch reads YIKYSSGSMEQG. Residues 271–291 traverse the membrane as a helical segment; the sequence is KVSSVFYTNVVPMLNPLIYSL. Residues 292–313 lie on the Cytoplasmic side of the membrane; sequence RNKDVKVALRKALIKIQRRNIF.

Belongs to the G-protein coupled receptor 1 family.

It localises to the cell membrane. Functionally, odorant receptor. This chain is Olfactory receptor 8B2 (OR8B2), found in Homo sapiens (Human).